Reading from the N-terminus, the 352-residue chain is Cyclin-dependent kinase-like 1 (352 aa).

The Protein kinase domain maps to 4 to 287 (YEKIGKIGEG…CEQLLQHPYF (284 aa)). Residues 10–18 (IGEGSYGVV) and lysine 33 contribute to the ATP site. The [NKR]KIAxRE motif lies at 45-51 (KKIALRE). Aspartate 126 serves as the catalytic Proton acceptor.

It belongs to the protein kinase superfamily. CMGC Ser/Thr protein kinase family. CDC2/CDKX subfamily.

Its subcellular location is the cytoplasm. It localises to the nucleus. It catalyses the reaction L-seryl-[protein] + ATP = O-phospho-L-seryl-[protein] + ADP + H(+). The catalysed reaction is L-threonyl-[protein] + ATP = O-phospho-L-threonyl-[protein] + ADP + H(+). This is Cyclin-dependent kinase-like 1 from Mus musculus (Mouse).